Here is a 252-residue protein sequence, read N- to C-terminus: Imidazole glycerol phosphate synthase subunit HisF (252 aa).

Residues Asp-11 and Asp-130 contribute to the active site.

Belongs to the HisA/HisF family. In terms of assembly, heterodimer of HisH and HisF.

It is found in the cytoplasm. It carries out the reaction 5-[(5-phospho-1-deoxy-D-ribulos-1-ylimino)methylamino]-1-(5-phospho-beta-D-ribosyl)imidazole-4-carboxamide + L-glutamine = D-erythro-1-(imidazol-4-yl)glycerol 3-phosphate + 5-amino-1-(5-phospho-beta-D-ribosyl)imidazole-4-carboxamide + L-glutamate + H(+). It participates in amino-acid biosynthesis; L-histidine biosynthesis; L-histidine from 5-phospho-alpha-D-ribose 1-diphosphate: step 5/9. In terms of biological role, IGPS catalyzes the conversion of PRFAR and glutamine to IGP, AICAR and glutamate. The HisF subunit catalyzes the cyclization activity that produces IGP and AICAR from PRFAR using the ammonia provided by the HisH subunit. The polypeptide is Imidazole glycerol phosphate synthase subunit HisF (Bacillus cereus (strain ATCC 10987 / NRS 248)).